The chain runs to 96 residues: Putative septation protein SpoVG (96 aa).

The protein belongs to the SpoVG family.

Functionally, could be involved in septation. The protein is Putative septation protein SpoVG of Geobacillus sp. (strain WCH70).